A 125-amino-acid chain; its full sequence is Small ribosomal subunit protein uS13 (125 aa).

Belongs to the universal ribosomal protein uS13 family. As to quaternary structure, part of the 30S ribosomal subunit. Forms a loose heterodimer with protein S19. Forms two bridges to the 50S subunit in the 70S ribosome.

In terms of biological role, located at the top of the head of the 30S subunit, it contacts several helices of the 16S rRNA. In the 70S ribosome it contacts the 23S rRNA (bridge B1a) and protein L5 of the 50S subunit (bridge B1b), connecting the 2 subunits; these bridges are implicated in subunit movement. Contacts the tRNAs in the A and P-sites. The chain is Small ribosomal subunit protein uS13 from Rickettsia prowazekii (strain Madrid E).